Reading from the N-terminus, the 146-residue chain is Universal stress protein A homolog 2 (146 aa).

The protein belongs to the universal stress protein A family. As to quaternary structure, homodimer.

The protein localises to the cytoplasm. Involved in stress response. This chain is Universal stress protein A homolog 2 (uspA2), found in Coxiella burnetii (strain RSA 493 / Nine Mile phase I).